Here is a 192-residue protein sequence, read N- to C-terminus: Phosphoheptose isomerase (192 aa).

The SIS domain maps to 34–192; sequence VVDAYKAGNK…VERELFVKGK (159 aa). 49-51 contacts substrate; the sequence is NGG. Residues H58 and E62 each contribute to the Zn(2+) site. Residues E62, 91-92, 117-119, S122, and Q169 each bind substrate; these read ND and STS. Q169 and H177 together coordinate Zn(2+).

It belongs to the SIS family. GmhA subfamily. Homotetramer. It depends on Zn(2+) as a cofactor.

Its subcellular location is the cytoplasm. The catalysed reaction is 2 D-sedoheptulose 7-phosphate = D-glycero-alpha-D-manno-heptose 7-phosphate + D-glycero-beta-D-manno-heptose 7-phosphate. The protein operates within carbohydrate biosynthesis; D-glycero-D-manno-heptose 7-phosphate biosynthesis; D-glycero-alpha-D-manno-heptose 7-phosphate and D-glycero-beta-D-manno-heptose 7-phosphate from sedoheptulose 7-phosphate: step 1/1. Functionally, catalyzes the isomerization of sedoheptulose 7-phosphate in D-glycero-D-manno-heptose 7-phosphate. This is Phosphoheptose isomerase from Citrifermentans bemidjiense (strain ATCC BAA-1014 / DSM 16622 / JCM 12645 / Bem) (Geobacter bemidjiensis).